We begin with the raw amino-acid sequence, 368 residues long: GLABROUS1 enhancer-binding protein-like (368 aa).

The disordered stretch occupies residues Met-1–Pro-123. The segment covering Ser-17–Ser-31 has biased composition (acidic residues). The span at Val-35–Ser-47 shows a compositional bias: basic and acidic residues. The span at Thr-84 to Ala-97 shows a compositional bias: polar residues. Positions Pro-100–Pro-123 are enriched in basic and acidic residues.

This sequence belongs to the GeBP family. As to quaternary structure, mono-, di- and oligomers. Associated with the Mediator complex. Interacts with MED6. Interacts with MED10A, MED28 and MED32. Interacts with DEK3.

The protein resides in the nucleus. In terms of biological role, transcription factor that binds promoters containing the CryR2 element, 5'-ACATAWCT-3'. The DNA-binding activity is decreased upon direct physical interaction with the mediator subunits and is modulated by redox conditions. The oxidized protein is the preferential binding form. This chain is GLABROUS1 enhancer-binding protein-like, found in Arabidopsis thaliana (Mouse-ear cress).